The primary structure comprises 46 residues: Large ribosomal subunit protein bL36 (46 aa).

It belongs to the bacterial ribosomal protein bL36 family.

This Escherichia coli O7:K1 (strain IAI39 / ExPEC) protein is Large ribosomal subunit protein bL36.